Reading from the N-terminus, the 603-residue chain is Geraniol synthase Tps-5073G30, chloroplastic (603 aa).

The transit peptide at 1 to 35 (MCSISQKVVIGLNKAAANNNLQNLDRRGFKTRCVS) directs the protein to the chloroplast. (2E)-geranyl diphosphate-binding residues include Arg319, Asp356, Asp360, Arg497, and Asp500. Asp356 and Asp360 together coordinate Mg(2+). Positions 356 to 360 (DDVYD) match the DDXXD motif motif. Residues Asp500, Thr504, and Glu508 each coordinate Mg(2+).

The protein belongs to the terpene synthase family. Tpsb subfamily. Monomer. Mg(2+) is required as a cofactor. Mn(2+) serves as cofactor.

It localises to the plastid. It is found in the chloroplast. It catalyses the reaction (2E)-geranyl diphosphate + H2O = (2E)-geraniol + diphosphate. Its pathway is secondary metabolite biosynthesis; terpenoid biosynthesis. Monoterpene synthase (mono-TPS) involved in the biosynthesis of monoterpenes natural products. Catalyzes the conversion of (2E)-geranyl diphosphate (GPP) into geraniol. This Perilla frutescens (Beefsteak mint) protein is Geraniol synthase Tps-5073G30, chloroplastic.